The sequence spans 297 residues: Phosphoribosylaminoimidazole-succinocarboxamide synthase (297 aa).

Belongs to the SAICAR synthetase family.

It carries out the reaction 5-amino-1-(5-phospho-D-ribosyl)imidazole-4-carboxylate + L-aspartate + ATP = (2S)-2-[5-amino-1-(5-phospho-beta-D-ribosyl)imidazole-4-carboxamido]succinate + ADP + phosphate + 2 H(+). Its pathway is purine metabolism; IMP biosynthesis via de novo pathway; 5-amino-1-(5-phospho-D-ribosyl)imidazole-4-carboxamide from 5-amino-1-(5-phospho-D-ribosyl)imidazole-4-carboxylate: step 1/2. The sequence is that of Phosphoribosylaminoimidazole-succinocarboxamide synthase from Methylococcus capsulatus (strain ATCC 33009 / NCIMB 11132 / Bath).